Consider the following 244-residue polypeptide: Monothiol glutaredoxin-4 (244 aa).

The Thioredoxin domain occupies 3–110 (VVEIKSQDQF…FVKSLEILSN (108 aa)). The interval 116–143 (ANNAKGPKSTSDEESSGSSDDEEDETEE) is disordered. Residues 127–143 (DEESSGSSDDEEDETEE) show a composition bias toward acidic residues. Residues 146–244 (NARLVKLVQA…DPEYFQHALQ (99 aa)) enclose the Glutaredoxin domain. Residue Lys-163 coordinates glutathione. Cys-171 is a [2Fe-2S] cluster binding site. Glutathione is bound by residues Arg-200, Phe-212, and 225-226 (LD).

This sequence belongs to the glutaredoxin family. Monothiol subfamily. Homodimer. Heterodimer with FRA2.

Functionally, monothiol glutaredoxin involved in the biogenesis of iron-sulfur clusters. Binds one iron-sulfur cluster per dimer. The iron-sulfur cluster is bound between subunits, and is complexed by a bound glutathione and a cysteine residue from each subunit. In Saccharomyces cerevisiae (strain ATCC 204508 / S288c) (Baker's yeast), this protein is Monothiol glutaredoxin-4 (GRX4).